The chain runs to 731 residues: Probable G-protein coupled receptor 149 (731 aa).

Residues 1 to 35 are Extracellular-facing; that stretch reads MSLFLSNLSTNDSSLWKENHNSTDLLNPPGTLNIY. N-linked (GlcNAc...) asparagine glycosylation is found at asparagine 7, asparagine 11, and asparagine 21. A helical transmembrane segment spans residues 36-56; sequence LFCLTCLMTFAALVGSIYSLI. The Cytoplasmic segment spans residues 57–69; the sequence is SLLKMQNRTVVSM. A helical membrane pass occupies residues 70 to 90; it reads LVASWSVDDLMSVLSVTIFMF. Topologically, residues 91–109 are extracellular; sequence LQWPNEVPGYFQFLCTTSA. Cysteine 105 and cysteine 182 are joined by a disulfide. The helical transmembrane segment at 110 to 132 threads the bilayer; it reads LMYLCQGLSSNLKATLLVSYNFY. Over 133 to 155 the chain is Cytoplasmic; it reads TMHRGVGSQTASRRSGQVLGVVL. A helical membrane pass occupies residues 156-176; the sequence is TVWAASLLLSALPLCGWGAFV. Over 177–189 the chain is Extracellular; it reads RTPWGCLVDCSSS. Residues 190-210 traverse the membrane as a helical segment; the sequence is YVLFLSIVYALAFGLLVGLSV. Over 211–310 the chain is Cytoplasmic; it reads PLTHRLLCSE…SFTVSVAQKR (100 aa). The interval 234-271 is disordered; that stretch reads RGASIPGTPPTAGRVVSLSPEDAPGPSLRRSGGCSPSS. The helical transmembrane segment at 311 to 331 threads the bilayer; the sequence is FALILALTKVVLWLPMMMHMV. At 332-342 the chain is on the extracellular side; sequence VQNVVGFQSLP. Residues 343 to 363 traverse the membrane as a helical segment; sequence LETFSFLLTLLATTVTPVFVL. Residues 364-731 lie on the Cytoplasmic side of the membrane; sequence SKRWTHLPCG…RKREEESKGS (368 aa). The segment at 475 to 526 is disordered; that stretch reads NTDITEAKQDSNNKKDAFSDKTGGDINYEETTFSEGPERRLSHEESQKPDLS. Composition is skewed to basic and acidic residues over residues 479–497 and 510–526; these read TEAKQDSNNKKDAFSDKTG and GPERRLSHEESQKPDLS.

Belongs to the G-protein coupled receptor 1 family.

The protein localises to the cell membrane. Its function is as follows. Orphan receptor. In Homo sapiens (Human), this protein is Probable G-protein coupled receptor 149 (GPR149).